The following is a 375-amino-acid chain: Filamin-binding LIM protein 1 (375 aa).

The tract at residues 1-70 (MASKPEKRVA…SPWTPPGRAA (70 aa)) is filamin-binding. 2 disordered regions span residues 43–119 (WEAP…PSEE) and 137–176 (HLSP…AERV). Pro residues-rich tracts occupy residues 104-114 (FPPPPPPPPVL) and 140-149 (PPLPPPPPQA). Residues 150-159 (PAERPSVQPS) show a composition bias toward low complexity. LIM zinc-binding domains lie at 183 to 244 (DICA…TLER), 245 to 302 (CGKC…RKFA), and 303 to 372 (PVCS…RSAA). An FERMT2-binding region spans residues 278-375 (IGDESFALGS…HVKRSAAGCC (98 aa)).

As to quaternary structure, interacts with FERMT2, FLNA, FLNB and FLNC. Interacts with NKX2-5.

The protein resides in the cell junction. The protein localises to the focal adhesion. It is found in the cytoplasm. Its subcellular location is the cytoskeleton. It localises to the stress fiber. In terms of biological role, serves as an anchoring site for cell-ECM adhesion proteins and filamin-containing actin filaments. Is implicated in cell shape modulation (spreading) and motility. May participate in the regulation of filamin-mediated cross-linking and stabilization of actin filaments. May also regulate the assembly of filamin-containing signaling complexes that control actin assembly. Promotes dissociation of FLNA from ITGB3 and ITGB7. Promotes activation of integrins and regulates integrin-mediated cell-cell adhesion. The sequence is that of Filamin-binding LIM protein 1 (FBLIM1) from Pongo abelii (Sumatran orangutan).